We begin with the raw amino-acid sequence, 1028 residues long: Protein SMAX1-LIKE 5 (1028 aa).

A Clp R domain is found at 8 to 199 (IQQTLTTEAA…CVEDCSVSSV (192 aa)). 2 repeat regions span residues 12-102 (LTTE…LNRL) and 116-199 (LANA…VSSV). The short motif at 871–875 (LDLNI) is the EAR element.

Belongs to the ClpA/ClpB family. Interacts probably with TPL/TPR in an EAR-motif dependent manner. Detected in roots, seedlings and axillary branches.

In terms of biological role, may function in a transcriptional corepressor complex. The polypeptide is Protein SMAX1-LIKE 5 (Arabidopsis thaliana (Mouse-ear cress)).